A 1212-amino-acid chain; its full sequence is DNA topoisomerase 1 (1212 aa).

Residues 1–114 (MKLVVVESPA…DVERVTFNAI (114 aa)) form the Toprim domain. 2 residues coordinate Mg(2+): glutamate 7 and aspartate 80. In terms of domain architecture, Topo IA-type catalytic spans 130–556 (DNDLINAYLA…AFWHDFKPKT (427 aa)). Positions 164–169 (SAGRVQ) are interaction with DNA. Catalysis depends on tyrosine 293, which acts as the O-(5'-phospho-DNA)-tyrosine intermediate. Residues 592 to 619 (CPSCHTGRLALKGGRFGAFIACSNYPEC) form a C4-type zinc finger. 3 disordered regions span residues 687-742 (GKGN…GVST), 758-937 (ALAG…KARA), and 1107-1212 (RAKM…EVAE). Composition is skewed to polar residues over residues 708–742 (ASST…GVST) and 770–782 (VSDN…SSTI). The span at 815-840 (ADNRLLSHRNGDIDSRAIPADHKDSS) shows a compositional bias: basic and acidic residues. 2 stretches are compositionally biased toward polar residues: residues 881–890 (AITSDNSPSD) and 897–906 (STPSSATSSV). A compositionally biased stretch (basic and acidic residues) spans 921 to 934 (KADEQAKEEEESRK). Over residues 1109-1140 (KMPKKKKTKKAAAKKPAAKKTTTKKAAPKKAT) the composition is skewed to basic residues. Residues 1141 to 1151 (TKTATPKSATT) show a composition bias toward low complexity. The span at 1167 to 1182 (PAKKAVAKKTTAKKPA) shows a compositional bias: basic residues. Over residues 1183–1199 (SKSATKKAPSSKTTAAK) the composition is skewed to low complexity.

It belongs to the type IA topoisomerase family. In terms of assembly, monomer. It depends on Mg(2+) as a cofactor.

It catalyses the reaction ATP-independent breakage of single-stranded DNA, followed by passage and rejoining.. Functionally, releases the supercoiling and torsional tension of DNA, which is introduced during the DNA replication and transcription, by transiently cleaving and rejoining one strand of the DNA duplex. Introduces a single-strand break via transesterification at a target site in duplex DNA. The scissile phosphodiester is attacked by the catalytic tyrosine of the enzyme, resulting in the formation of a DNA-(5'-phosphotyrosyl)-enzyme intermediate and the expulsion of a 3'-OH DNA strand. The free DNA strand then undergoes passage around the unbroken strand, thus removing DNA supercoils. Finally, in the religation step, the DNA 3'-OH attacks the covalent intermediate to expel the active-site tyrosine and restore the DNA phosphodiester backbone. In Zymomonas mobilis subsp. mobilis (strain ATCC 31821 / ZM4 / CP4), this protein is DNA topoisomerase 1.